Consider the following 710-residue polypeptide: Solute carrier organic anion transporter family member 3A1 (710 aa).

At Met1 the chain carries N-acetylmethionine. Residues Met1–Ser15 are compositionally biased toward gly residues. The interval Met1 to Arg25 is disordered. Residues Met1 to Lys40 are Cytoplasmic-facing. Residues Ile41–Leu60 form a helical membrane-spanning segment. Topologically, residues Val61–Gly79 are extracellular. A helical membrane pass occupies residues Val80–Gly100. At Ala101–Pro106 the chain is on the cytoplasmic side. Residues Arg107 to His131 traverse the membrane as a helical segment. Over Gln132–Asn174 the chain is Extracellular. 2 N-linked (GlcNAc...) asparagine glycosylation sites follow: Asn153 and Asn169. A helical membrane pass occupies residues Met175 to Asp203. The Cytoplasmic portion of the chain corresponds to Asp204–Leu222. The chain crosses the membrane as a helical span at residues Val223–Ala243. Residues Val244 to Ile261 are Extracellular-facing. The chain crosses the membrane as a helical span at residues Gly262–Pro286. At Gln287–His344 the chain is on the cytoplasmic side. Residues Leu345–Ala366 traverse the membrane as a helical segment. The Extracellular portion of the chain corresponds to Gly367–Ser386. An N-linked (GlcNAc...) asparagine glycan is attached at Asn381. A helical membrane pass occupies residues Ala387–Val410. Over Lys411–Ser414 the chain is Cytoplasmic. Residues Leu415–Phe438 traverse the membrane as a helical segment. The Extracellular portion of the chain corresponds to Leu439–Phe539. N-linked (GlcNAc...) asparagine glycosylation occurs at Asn457. Residues Leu465–Thr513 enclose the Kazal-like domain. 3 disulfide bridges follow: Cys471–Cys497, Cys475–Cys486, and Cys477–Cys501. N-linked (GlcNAc...) asparagine glycans are attached at residues Asn502, Asn505, and Asn519. The helical transmembrane segment at Leu540–Ile562 threads the bilayer. Topologically, residues Arg563–Ser571 are cytoplasmic. Residues Tyr572–Ile597 form a helical membrane-spanning segment. At Asp598–Ala630 the chain is on the extracellular side. The helical transmembrane segment at Ile631–Leu648 threads the bilayer. Residues Arg649 to Asn705 lie on the Cytoplasmic side of the membrane.

The protein belongs to the organo anion transporter (TC 2.A.60) family. As to expression, widely expressed.

The protein resides in the basolateral cell membrane. It is found in the apical cell membrane. Its subcellular location is the basal cell membrane. It carries out the reaction L-thyroxine(out) = L-thyroxine(in). The enzyme catalyses prostaglandin E1(out) = prostaglandin E1(in). The catalysed reaction is prostaglandin E2(out) = prostaglandin E2(in). It catalyses the reaction prostaglandin F2alpha(out) = prostaglandin F2alpha(in). It carries out the reaction (5Z,8Z,11Z,14Z)-eicosatetraenoate(out) = (5Z,8Z,11Z,14Z)-eicosatetraenoate(in). The enzyme catalyses taurocholate(out) = taurocholate(in). The catalysed reaction is glycocholate(out) = glycocholate(in). It catalyses the reaction estrone 3-sulfate(out) = estrone 3-sulfate(in). It carries out the reaction argipressin(out) = argipressin(in). In terms of biological role, putative organic anion antiporter with apparent broad substrate specificity. Recognizes various substrates including thyroid hormone L-thyroxine, prostanoids such as prostaglandin E1 and E2, bile acids such as taurocholate, glycolate and glycochenodeoxycholate and peptide hormones such as L-arginine vasopressin, likely operating in a tissue-specific manner. The transport mechanism, its electrogenicity and potential tissue-specific counterions remain to be elucidated. This is Solute carrier organic anion transporter family member 3A1 (Slco3a1) from Mus musculus (Mouse).